The primary structure comprises 643 residues: Extracellular metalloproteinase 4 (643 aa).

The N-terminal stretch at 1 to 18 (MHGLLLAGLLALPLNVLA) is a signal peptide. Positions 19 to 254 (HPTESHSSGI…VHSVVDYVSA (236 aa)) are excised as a propeptide. Residues 47–57 (TKSDAVPKQDD) show a composition bias toward basic and acidic residues. The disordered stretch occupies residues 47-71 (TKSDAVPKQDDESFTTSSTGDDNVS). The span at 60-71 (FTTSSTGDDNVS) shows a compositional bias: polar residues. N271 and N420 each carry an N-linked (GlcNAc...) asparagine glycan. A Zn(2+)-binding site is contributed by H437. E438 is a catalytic residue. H441 serves as a coordination point for Zn(2+). Residues N510 and N553 are each glycosylated (N-linked (GlcNAc...) asparagine).

This sequence belongs to the peptidase M36 family. Requires Zn(2+) as cofactor.

Its subcellular location is the secreted. Its function is as follows. Secreted metalloproteinase probably acting as a virulence factor. The chain is Extracellular metalloproteinase 4 (MEP4) from Arthroderma benhamiae (Trichophyton mentagrophytes).